A 275-amino-acid chain; its full sequence is Mitochondrial outer membrane protein porin (275 aa).

Met1 carries the blocked amino end (Met) modification.

The protein belongs to the eukaryotic mitochondrial porin family. Highly divergent.

The protein localises to the mitochondrion outer membrane. Its function is as follows. Forms a channel of about 1,7 nM through the cell membrane that allows diffusion of small hydrophilic molecules. The channel adopts an open conformation at low or zero membrane potential and a closed conformation at potentials above 20 mv. The open state has a weak anion selectivity whereas the closed state is cation-selective. The polypeptide is Mitochondrial outer membrane protein porin (porA) (Dictyostelium discoideum (Social amoeba)).